The following is a 149-amino-acid chain: Protein FAM72A (149 aa).

It belongs to the FAM72 family. As to quaternary structure, interacts with UNG. As to expression, expressed at high levels in stomach and also in kidney and, at low levels, in heart (at protein level). In the stomach, highly expressed in foveolar cells, parietal cells and chief cells (at protein level). In kidney, expressed in endothelial cells, mesangial and epithelial cells (parietal and visceral epithelium) around glomerulus (at protein level).

The protein resides in the cytoplasm. It is found in the mitochondrion. Its function is as follows. May play a role in the regulation of cellular reactive oxygen species metabolism. May participate in cell growth regulation. This Bos taurus (Bovine) protein is Protein FAM72A (FAM72A).